A 187-amino-acid chain; its full sequence is Casparian strip membrane protein 5 (187 aa).

At 1–24 (MKSGQAEIVETSKGIQKSGLMSRR) the chain is on the cytoplasmic side. Residues 25-45 (IAILEFILRIVAFFNTIGSAI) traverse the membrane as a helical segment. The Extracellular portion of the chain corresponds to 46 to 74 (LMGTTHETLPFFTQFIRFQAEYNDLPALT). Residues 75-95 (FFVVANAVVSGYLIMSLTLAF) form a helical membrane-spanning segment. The Cytoplasmic segment spans residues 96 to 107 (VHIVKRKTQNTR). A helical membrane pass occupies residues 108-128 (ILLIVLDVAMLGLLSAGASSA). The Extracellular segment spans residues 129–161 (AAIVYLAHNGNNKTNWFAICQQFNSFCERISGS). The N-linked (GlcNAc...) asparagine glycan is linked to N140. The helical transmembrane segment at 162–182 (LIGSFIAVVLLILLILLSAIA) threads the bilayer. The Cytoplasmic segment spans residues 183-187 (LSRRH).

The protein belongs to the Casparian strip membrane proteins (CASP) family. As to quaternary structure, homodimer and heterodimers.

Its subcellular location is the cell membrane. Functionally, regulates membrane-cell wall junctions and localized cell wall deposition. Required for establishment of the Casparian strip membrane domain (CSD) and the subsequent formation of Casparian strips, a cell wall modification of the root endodermis that determines an apoplastic barrier between the intraorganismal apoplasm and the extraorganismal apoplasm and prevents lateral diffusion. This Arabidopsis lyrata subsp. lyrata (Lyre-leaved rock-cress) protein is Casparian strip membrane protein 5.